Here is a 333-residue protein sequence, read N- to C-terminus: Transcription initiation factor IIB (333 aa).

A TFIIB-type zinc finger spans residues 33-64 (EVYRCPICGNDRFVYNYERGEIVCIVCGAVVQ). 4 residues coordinate Zn(2+): C37, C40, C56, and C59. Tandem repeats lie at residues 149 to 232 (QELE…LREL) and 243 to 324 (LYIS…ELAK).

This sequence belongs to the TFIIB family.

Functionally, stabilizes TBP binding to an archaeal box-A promoter. Also responsible for recruiting RNA polymerase II to the pre-initiation complex (DNA-TBP-TFIIB). This is Transcription initiation factor IIB from Pyrobaculum islandicum (strain DSM 4184 / JCM 9189 / GEO3).